We begin with the raw amino-acid sequence, 297 residues long: MSQPPAKRQKRAEYRKQAAEAVVAQPDESAPVAHVKLPKKKFYRQRAHANPFSDHQLNYPLSPAHMDWASHFPAFVNPDATQTNLIGTRKLLKDVEVVDIGCGFGGLLVGLAGLLPETLMVGMEIRIAVLEYLNTRIQALRVQQQQQQQKTQSHAALVPGGYQNISAIRSNTMKFFPNFFNKHQLSKIFICFPDPHFKARKHKARIISETLNAEYAYALRPGGLLYTITDVEEYHHWILRHFRDESALFERVSEEELEKDECVKVMKEATEEGKKVTRNKGNKYVAVFRRKEDPEWA.

S-adenosyl-L-methionine contacts are provided by residues Gly-101, 124–125, 171–172, and Cys-191; these read EI and NT. Asp-194 is a catalytic residue. 270-272 lines the S-adenosyl-L-methionine pocket; the sequence is TEE.

The protein belongs to the class I-like SAM-binding methyltransferase superfamily. TrmB family. Forms a complex with trm82.

It is found in the nucleus. The enzyme catalyses guanosine(46) in tRNA + S-adenosyl-L-methionine = N(7)-methylguanosine(46) in tRNA + S-adenosyl-L-homocysteine. It participates in tRNA modification; N(7)-methylguanine-tRNA biosynthesis. In terms of biological role, catalyzes the formation of N(7)-methylguanine at position 46 (m7G46) in tRNA. This is tRNA (guanine-N(7)-)-methyltransferase (trm8) from Aspergillus niger (strain ATCC MYA-4892 / CBS 513.88 / FGSC A1513).